A 193-amino-acid polypeptide reads, in one-letter code: Penicillin-binding protein activator LpoB (193 aa).

An N-terminal signal peptide occupies residues 1–16 (MKKMLFVVAAVFLLAG). Cys17 carries the N-palmitoyl cysteine lipid modification. Cys17 carries the S-diacylglycerol cysteine lipid modification. The interval 23-50 (QQPPAPVEPVTPTEPTEPPKPIEPPIEV) is disordered. The segment covering 37-46 (PTEPPKPIEP) has biased composition (pro residues).

Belongs to the LpoB family. In terms of assembly, interacts with PBP1b.

It is found in the cell outer membrane. Its function is as follows. Regulator of peptidoglycan synthesis that is essential for the function of penicillin-binding protein 1B (PBP1b). This chain is Penicillin-binding protein activator LpoB, found in Proteus mirabilis (strain HI4320).